A 168-amino-acid polypeptide reads, in one-letter code: PTS system glucose-specific EIIA component (168 aa).

A PTS EIIA type-1 domain is found at 38–142 (DEVFSNKIVG…STLTPVIISN (105 aa)). His-75 and His-90 together coordinate Zn(2+). Catalysis depends on His-90, which acts as the Tele-phosphohistidine intermediate; for EIIA activity. At His-90 the chain carries Phosphohistidine; by HPr.

Requires Zn(2+) as cofactor.

It is found in the cytoplasm. Its function is as follows. The phosphoenolpyruvate-dependent sugar phosphotransferase system (sugar PTS), a major carbohydrate active transport system, catalyzes the phosphorylation of incoming sugar substrates concomitantly with their translocation across the cell membrane. The enzyme II complex composed of PtsG and Crr is involved in glucose transport. This chain is PTS system glucose-specific EIIA component (crr), found in Buchnera aphidicola subsp. Baizongia pistaciae (strain Bp).